We begin with the raw amino-acid sequence, 433 residues long: tRNA modification GTPase MnmE (433 aa).

3 residues coordinate (6S)-5-formyl-5,6,7,8-tetrahydrofolate: Arg-24, Glu-81, and Arg-120. A TrmE-type G domain is found at 216–359 (GVEIVVLGAP…LLAALRARVE (144 aa)). K(+) is bound at residue Asn-226. Residues 226 to 231 (NAGKST), 245 to 251 (SDIPGTT), 270 to 273 (DTAG), and 340 to 342 (SAR) each bind GTP. Residue Ser-230 participates in Mg(2+) binding. Residues Ser-245, Ile-247, and Thr-250 each coordinate K(+). Thr-251 provides a ligand contact to Mg(2+). A (6S)-5-formyl-5,6,7,8-tetrahydrofolate-binding site is contributed by Lys-433.

This sequence belongs to the TRAFAC class TrmE-Era-EngA-EngB-Septin-like GTPase superfamily. TrmE GTPase family. As to quaternary structure, homodimer. Heterotetramer of two MnmE and two MnmG subunits. K(+) serves as cofactor.

The protein localises to the cytoplasm. Functionally, exhibits a very high intrinsic GTPase hydrolysis rate. Involved in the addition of a carboxymethylaminomethyl (cmnm) group at the wobble position (U34) of certain tRNAs, forming tRNA-cmnm(5)s(2)U34. The protein is tRNA modification GTPase MnmE of Acidiphilium cryptum (strain JF-5).